Consider the following 206-residue polypeptide: Small ribosomal subunit protein uS4 (206 aa).

The 61-residue stretch at 96-156 folds into the S4 RNA-binding domain; that stretch reads GRLDNVVYRM…EKAKKQARIK (61 aa).

It belongs to the universal ribosomal protein uS4 family. In terms of assembly, part of the 30S ribosomal subunit. Contacts protein S5. The interaction surface between S4 and S5 is involved in control of translational fidelity.

Its function is as follows. One of the primary rRNA binding proteins, it binds directly to 16S rRNA where it nucleates assembly of the body of the 30S subunit. Functionally, with S5 and S12 plays an important role in translational accuracy. This Aeromonas salmonicida (strain A449) protein is Small ribosomal subunit protein uS4.